Consider the following 220-residue polypeptide: Putative glutathione S-transferase C460.02c (220 aa).

Residues Met1–Asp81 form the GST N-terminal domain. The GST C-terminal domain occupies Asn89–Thr216.

This sequence belongs to the GST superfamily.

Its subcellular location is the cytoplasm. The enzyme catalyses RX + glutathione = an S-substituted glutathione + a halide anion + H(+). Functionally, involved in the oxidative stress response and detoxification. This chain is Putative glutathione S-transferase C460.02c, found in Schizosaccharomyces pombe (strain 972 / ATCC 24843) (Fission yeast).